Reading from the N-terminus, the 212-residue chain is tRNA (guanine-N(7)-)-methyltransferase (212 aa).

S-adenosyl-L-methionine is bound by residues E44, D69, D96, and D118. D118 is a catalytic residue. K122 is a substrate binding site. The tract at residues 124 to 129 (RHEKRR) is interaction with RNA. Residues D154 and 191–194 (TEYE) contribute to the substrate site.

It belongs to the class I-like SAM-binding methyltransferase superfamily. TrmB family.

It carries out the reaction guanosine(46) in tRNA + S-adenosyl-L-methionine = N(7)-methylguanosine(46) in tRNA + S-adenosyl-L-homocysteine. The protein operates within tRNA modification; N(7)-methylguanine-tRNA biosynthesis. Catalyzes the formation of N(7)-methylguanine at position 46 (m7G46) in tRNA. The sequence is that of tRNA (guanine-N(7)-)-methyltransferase from Streptococcus sanguinis (strain SK36).